Reading from the N-terminus, the 196-residue chain is Orotate phosphoribosyltransferase (196 aa).

Position 117-125 (E117–S125) interacts with 5-phospho-alpha-D-ribose 1-diphosphate. Orotate contacts are provided by T121 and R149.

This sequence belongs to the purine/pyrimidine phosphoribosyltransferase family. PyrE subfamily. Homodimer. The cofactor is Mg(2+).

The catalysed reaction is orotidine 5'-phosphate + diphosphate = orotate + 5-phospho-alpha-D-ribose 1-diphosphate. It functions in the pathway pyrimidine metabolism; UMP biosynthesis via de novo pathway; UMP from orotate: step 1/2. Catalyzes the transfer of a ribosyl phosphate group from 5-phosphoribose 1-diphosphate to orotate, leading to the formation of orotidine monophosphate (OMP). In Methylorubrum populi (strain ATCC BAA-705 / NCIMB 13946 / BJ001) (Methylobacterium populi), this protein is Orotate phosphoribosyltransferase.